The chain runs to 156 residues: S-ribosylhomocysteine lyase (156 aa).

Fe cation is bound by residues His-53, His-57, and Cys-122.

This sequence belongs to the LuxS family. As to quaternary structure, homodimer. It depends on Fe cation as a cofactor.

It catalyses the reaction S-(5-deoxy-D-ribos-5-yl)-L-homocysteine = (S)-4,5-dihydroxypentane-2,3-dione + L-homocysteine. In terms of biological role, involved in the synthesis of autoinducer 2 (AI-2) which is secreted by bacteria and is used to communicate both the cell density and the metabolic potential of the environment. The regulation of gene expression in response to changes in cell density is called quorum sensing. Catalyzes the transformation of S-ribosylhomocysteine (RHC) to homocysteine (HC) and 4,5-dihydroxy-2,3-pentadione (DPD). The protein is S-ribosylhomocysteine lyase of Finegoldia magna (strain ATCC 29328 / DSM 20472 / WAL 2508) (Peptostreptococcus magnus).